The following is a 474-amino-acid chain: Cytochrome c-552 (474 aa).

The first 29 residues, 1-29 (MSIKHWMASSVSVTALVMTALLNITAVSA), serve as a signal peptide directing secretion. His-91 serves as a coordination point for heme c. Positions 119, 122, and 123 each coordinate heme. Residues Cys-157, Cys-160, His-161, Cys-206, Cys-209, and His-210 each coordinate heme c. Ca(2+)-binding residues include Glu-212, Tyr-213, Lys-258, and Gln-260. Tyr-213 is a binding site for substrate. A substrate-binding site is contributed by His-261. Residues His-272, Cys-279, Cys-282, His-283, His-298, Cys-311, Cys-314, His-315, and His-390 each coordinate heme c.

Belongs to the cytochrome c-552 family. Ca(2+) is required as a cofactor. It depends on heme c as a cofactor.

It is found in the periplasm. It catalyses the reaction 6 Fe(III)-[cytochrome c] + NH4(+) + 2 H2O = 6 Fe(II)-[cytochrome c] + nitrite + 8 H(+). The protein operates within nitrogen metabolism; nitrate reduction (assimilation). Functionally, catalyzes the reduction of nitrite to ammonia, consuming six electrons in the process. In Vibrio vulnificus (strain CMCP6), this protein is Cytochrome c-552.